A 394-amino-acid polypeptide reads, in one-letter code: Phosphoglycerate kinase (394 aa).

Substrate-binding positions include 21–23 (DFN), Arg-36, 59–62 (HLGR), Arg-118, and Arg-151. ATP-binding positions include Lys-202, Gly-293, Glu-324, and 350–353 (GGDS).

This sequence belongs to the phosphoglycerate kinase family. In terms of assembly, monomer.

It localises to the cytoplasm. The enzyme catalyses (2R)-3-phosphoglycerate + ATP = (2R)-3-phospho-glyceroyl phosphate + ADP. It functions in the pathway carbohydrate degradation; glycolysis; pyruvate from D-glyceraldehyde 3-phosphate: step 2/5. In Exiguobacterium sp. (strain ATCC BAA-1283 / AT1b), this protein is Phosphoglycerate kinase.